The chain runs to 1439 residues: ABC transporter G family member 14 (1439 aa).

A compositionally biased stretch (basic and acidic residues) spans 1–17 (MEENSNKFEQELKEIGQ). Residues 1–21 (MEENSNKFEQELKEIGQDRNQ) form a disordered region. An ABC transporter 1 domain is found at 117-370 (FSILNFFKPS…FMSLGFDCEP (254 aa)). The ABC transmembrane type-2 1 domain maps to 475-700 (LNDKFGLFTK…GSEFDAYRIC (226 aa)). 6 consecutive transmembrane segments (helical) span residues 479–499 (FGLF…SSVF), 516–536 (ILSA…MTFI), 564–584 (IPFT…MFGL), 589–609 (GKFF…TALF), 614–634 (YLCP…IFML), and 734–754 (IIVY…MEYI). An ABC transporter 2 domain is found at 805 to 1049 (FTWQNIRYTV…LTSYFERHGV (245 aa)). Position 841-848 (841-848 (GSSGAGKT)) interacts with ATP. Residues 1141 to 1366 (YYTYGSFVQS…YNTCQNYTSA (226 aa)) form the ABC transmembrane type-2 2 domain. Transmembrane regions (helical) follow at residues 1144-1164 (YGSF…FWNL), 1175-1195 (IFFI…VMPQ), 1217-1237 (FAIS…TIFF), 1256-1276 (FYFW…GQAV), 1283-1303 (MFFA…FSGV), and 1413-1433 (VGII…FVYL).

This sequence belongs to the ABC transporter superfamily. ABCG family. PDR (TC 3.A.1.205) subfamily.

The protein resides in the membrane. This is ABC transporter G family member 14 (abcG14) from Dictyostelium discoideum (Social amoeba).